Consider the following 376-residue polypeptide: S-adenosylmethionine synthase (376 aa).

His-15 lines the ATP pocket. Asp-17 is a binding site for Mg(2+). Glu-43 lines the K(+) pocket. L-methionine contacts are provided by Glu-56 and Gln-92. Residues 92–102 (QSKEIANQVDR) form a flexible loop region. ATP-binding positions include 156–158 (DMK), Asp-231, 237–238 (RK), Ala-254, and Lys-258. Asp-231 provides a ligand contact to L-methionine. An L-methionine-binding site is contributed by Lys-262.

It belongs to the AdoMet synthase family. As to quaternary structure, homotetramer; dimer of dimers. Mg(2+) is required as a cofactor. The cofactor is K(+).

Its subcellular location is the cytoplasm. The catalysed reaction is L-methionine + ATP + H2O = S-adenosyl-L-methionine + phosphate + diphosphate. It functions in the pathway amino-acid biosynthesis; S-adenosyl-L-methionine biosynthesis; S-adenosyl-L-methionine from L-methionine: step 1/1. Catalyzes the formation of S-adenosylmethionine (AdoMet) from methionine and ATP. The overall synthetic reaction is composed of two sequential steps, AdoMet formation and the subsequent tripolyphosphate hydrolysis which occurs prior to release of AdoMet from the enzyme. This Mycoplasmopsis pulmonis (strain UAB CTIP) (Mycoplasma pulmonis) protein is S-adenosylmethionine synthase.